Consider the following 90-residue polypeptide: C-C motif chemokine 4 homolog (90 aa).

An N-terminal signal peptide occupies residues 1 to 21; that stretch reads MKVSVAALAVLLIAICYQTSA. Disulfide bonds link Cys32–Cys56 and Cys33–Cys72.

It belongs to the intercrine beta (chemokine CC) family. Homodimer.

It is found in the secreted. Functionally, monokine with inflammatory and chemokinetic properties. This Gallus gallus (Chicken) protein is C-C motif chemokine 4 homolog (CCL4).